The sequence spans 724 residues: RINT1-like protein (724 aa).

In terms of domain architecture, RINT1/TIP20 spans 163-724; sequence RLHAVQAQSL…LERRMDIKMF (562 aa).

Belongs to the RINT1 family.

Functionally, during cytokinesis in male meiotic cells, required for completion of cleavage furrow ingression possibly in conjunction with Zw10. Required for maintenance of Golgi stack number and morphology. Essential for acroblast assembly. This chain is RINT1-like protein, found in Drosophila melanogaster (Fruit fly).